A 264-amino-acid polypeptide reads, in one-letter code: 3-methyl-2-oxobutanoate hydroxymethyltransferase (264 aa).

D45 and D84 together coordinate Mg(2+). Residues 45–46, D84, and K112 contribute to the 3-methyl-2-oxobutanoate site; that span reads DS. E114 is a Mg(2+) binding site. E181 serves as the catalytic Proton acceptor.

It belongs to the PanB family. In terms of assembly, homodecamer; pentamer of dimers. Mg(2+) is required as a cofactor.

The protein localises to the cytoplasm. It carries out the reaction 3-methyl-2-oxobutanoate + (6R)-5,10-methylene-5,6,7,8-tetrahydrofolate + H2O = 2-dehydropantoate + (6S)-5,6,7,8-tetrahydrofolate. It participates in cofactor biosynthesis; (R)-pantothenate biosynthesis; (R)-pantoate from 3-methyl-2-oxobutanoate: step 1/2. Catalyzes the reversible reaction in which hydroxymethyl group from 5,10-methylenetetrahydrofolate is transferred onto alpha-ketoisovalerate to form ketopantoate. This chain is 3-methyl-2-oxobutanoate hydroxymethyltransferase, found in Escherichia coli (strain K12 / MC4100 / BW2952).